Consider the following 595-residue polypeptide: ATPase family AAA domain-containing protein 3 (595 aa).

A disordered region spans residues 1-48; that stretch reads MSWLFGVQKNATPQIPDDFQAGAAPGGPQQPGQGQRQEGNSKMAYSFD. The Mitochondrial intermembrane portion of the chain corresponds to 1-243; sequence MSWLFGVQKN…LNQFLNDKTK (243 aa). Residues 20–35 show a composition bias toward low complexity; the sequence is QAGAAPGGPQQPGQGQ. 2 coiled-coil regions span residues 80 to 107 and 140 to 175; these read VTRQ…HIRV and EELA…EHEL. Residues 244 to 260 traverse the membrane as a helical segment; it reads IAAAVGGLTALAVGWYT. Residues 261–595 lie on the Mitochondrial matrix side of the membrane; that stretch reads AKRGTGVTAR…GTTLKRETAV (335 aa). An ATP-binding site is contributed by 349–356; that stretch reads GPPGTGKT. A PDZ-binding motif is present at residues 592–595; sequence ETAV.

Belongs to the AAA ATPase family.

The protein resides in the mitochondrion inner membrane. Its subcellular location is the mitochondrion matrix. It localises to the mitochondrion nucleoid. Its function is as follows. Essential for mitochondrial network organization, mitochondrial metabolism and cell growth at organism and cellular level. Important during development for the up-regulation of mitochondrial activity during the transition to higher larval stages. Regulates mitochondrial iron homeostasis. May play an important role in mitochondrial protein synthesis. May also participate in mitochondrial DNA replication. May bind to mitochondrial DNA D-loops and contribute to nucleoid stability. Plays a role in regulating the production of reactive oxygen species in response to heat stress. This Caenorhabditis elegans protein is ATPase family AAA domain-containing protein 3.